We begin with the raw amino-acid sequence, 985 residues long: NAD kinase 2, chloroplastic (985 aa).

Residues 1-62 (MFLCFCPCHV…KRRLRFVIRA (62 aa)) constitute a chloroplast transit peptide. Residues 335–380 (APKAEQVELFASIVSDSSKRPIYVHSKEGVWRTSAMVSRWKQYMTR) form a calmodulin-binding region. Disordered stretches follow at residues 389 to 466 (SEES…PPGN) and 548 to 615 (FSNG…DEAG). Composition is skewed to basic and acidic residues over residues 390–399 (EESKRREVSE) and 413–429 (VPDE…EVDS). Positions 548-569 (FSNGNVHASDNTNKSISDNRGN) are enriched in polar residues.

Belongs to the NAD kinase family. As to expression, expressed in leaves.

The protein resides in the plastid. It localises to the chloroplast. It catalyses the reaction NAD(+) + ATP = ADP + NADP(+) + H(+). In terms of biological role, involved in chlorophyll synthesis and chloroplast protection against oxidative damage. The protein is NAD kinase 2, chloroplastic (NADK2) of Arabidopsis thaliana (Mouse-ear cress).